A 200-amino-acid chain; its full sequence is dTTP/UTP pyrophosphatase (200 aa).

Asp-81 serves as the catalytic Proton acceptor.

The protein belongs to the Maf family. YhdE subfamily. A divalent metal cation is required as a cofactor.

It localises to the cytoplasm. The enzyme catalyses dTTP + H2O = dTMP + diphosphate + H(+). The catalysed reaction is UTP + H2O = UMP + diphosphate + H(+). Nucleoside triphosphate pyrophosphatase that hydrolyzes dTTP and UTP. May have a dual role in cell division arrest and in preventing the incorporation of modified nucleotides into cellular nucleic acids. The chain is dTTP/UTP pyrophosphatase from Cupriavidus metallidurans (strain ATCC 43123 / DSM 2839 / NBRC 102507 / CH34) (Ralstonia metallidurans).